The primary structure comprises 189 residues: Cold-regulated 413 plasma membrane protein 3 (189 aa).

The Extracellular segment spans residues 1–24 (MENIEYLNEIQAVAGKLIHSYGVP). A helical membrane pass occupies residues 25–45 (VMITLFLRWLASIVAVFLMIL). Residues 46–55 (DQTKWKYSNN) are Cytoplasmic-facing. The chain crosses the membrane as a helical span at residues 56–76 (IMASLLAPYLFSSLPIVIFQV). Topologically, residues 77–79 (LRN) are extracellular. The chain crosses the membrane as a helical span at residues 80 to 100 (GVGKWIALLTVILRLFLPNHF). The Cytoplasmic portion of the chain corresponds to 101-104 (HESL). A helical transmembrane segment spans residues 105-125 (EIPGATILLIVVTPSDIGAIF). Over 126–168 (RDDLRYTGGDVCLLTSFYLINKHTKACGGIKNSFTQKDKVTYS) the chain is Extracellular. Residues 169–189 (ICLWILFVYPILSSFAALFYL) traverse the membrane as a helical segment.

Belongs to the Cold-regulated 413 protein family.

The protein resides in the cell membrane. The polypeptide is Cold-regulated 413 plasma membrane protein 3 (Arabidopsis thaliana (Mouse-ear cress)).